We begin with the raw amino-acid sequence, 257 residues long: NAD-dependent protein deacylase (257 aa).

One can recognise a Deacetylase sirtuin-type domain in the interval 1–252 (MLGHAAKLLA…LRRVKDIMAE (252 aa)). 20 to 39 (GAGISAESGIPTFRGRNGLW) provides a ligand contact to NAD(+). Residues tyrosine 64 and arginine 67 each contribute to the substrate site. Residue 98-101 (QNVD) coordinates NAD(+). Catalysis depends on histidine 116, which acts as the Proton acceptor. Zn(2+) is bound by residues cysteine 124, cysteine 127, cysteine 151, and cysteine 154. Residues 191–193 (GTS), 217–219 (NVE), and alanine 235 each bind NAD(+).

This sequence belongs to the sirtuin family. Class III subfamily. It depends on Zn(2+) as a cofactor.

The protein resides in the cytoplasm. It carries out the reaction N(6)-acetyl-L-lysyl-[protein] + NAD(+) + H2O = 2''-O-acetyl-ADP-D-ribose + nicotinamide + L-lysyl-[protein]. It catalyses the reaction N(6)-succinyl-L-lysyl-[protein] + NAD(+) + H2O = 2''-O-succinyl-ADP-D-ribose + nicotinamide + L-lysyl-[protein]. Its function is as follows. NAD-dependent lysine deacetylase and desuccinylase that specifically removes acetyl and succinyl groups on target proteins. Modulates the activities of several proteins which are inactive in their acylated form. Deacetylates the N-terminal lysine residue of Alba, the major archaeal chromatin protein and that, in turn, increases Alba's DNA binding affinity, thereby repressing transcription. The sequence is that of NAD-dependent protein deacylase from Thermococcus kodakarensis (strain ATCC BAA-918 / JCM 12380 / KOD1) (Pyrococcus kodakaraensis (strain KOD1)).